We begin with the raw amino-acid sequence, 492 residues long: MNNLVKLTISQAISGLKNKEFTATDLVTAHINQMDKYRCINAYITEIPELALQAAKKSDFLIQTNQARPIEGIPVSIKDLFCTKGILTTAASKMLQNFTPVYDATVYSKIINAGGIMLGKGNMDEFAMGSANINSYFGNVINPWKAENDDIDLTPGGSSGGSSAAVAAFMAMAALGSDTGGSVRQPASYTGTVGIKPSYGRCSRWGMIAFSCSLDQAGIITRTVEDAAIMLETMMGYDEKDSTSLNVEVPNLRSAVNQPIKGMKIGIPYDLMENKSLSSEIITMWQNTINLLKDHGVEIVSISLPYINYALPVYYVLSSAEASSNLARYDGVRYGLRVEGKNSNINEIYELSRSEGFGAEVKRRIMMGTYALASTNINSYYIKAQQVRRLIVNDFTNSFNKVDCILIPSAPTAAFPLNSNQDDPVTMYLNDILTIPASLAGLPCISIPAGFSANKLPLGMQVIGSRLDEYNIIKISSAIEKALNLKFIPKGF.

Catalysis depends on charge relay system residues lysine 78 and serine 158. Serine 182 (acyl-ester intermediate) is an active-site residue.

It belongs to the amidase family. GatA subfamily. Heterotrimer of A, B and C subunits.

The enzyme catalyses L-glutamyl-tRNA(Gln) + L-glutamine + ATP + H2O = L-glutaminyl-tRNA(Gln) + L-glutamate + ADP + phosphate + H(+). Its function is as follows. Allows the formation of correctly charged Gln-tRNA(Gln) through the transamidation of misacylated Glu-tRNA(Gln) in organisms which lack glutaminyl-tRNA synthetase. The reaction takes place in the presence of glutamine and ATP through an activated gamma-phospho-Glu-tRNA(Gln). The polypeptide is Glutamyl-tRNA(Gln) amidotransferase subunit A (Orientia tsutsugamushi (strain Ikeda) (Rickettsia tsutsugamushi)).